Consider the following 186-residue polypeptide: NADH-quinone oxidoreductase subunit B (186 aa).

The [4Fe-4S] cluster site is built by Cys44, Cys45, Cys110, and Cys139.

The protein belongs to the complex I 20 kDa subunit family. In terms of assembly, NDH-1 is composed of 14 different subunits. Subunits NuoB, C, D, E, F, and G constitute the peripheral sector of the complex. [4Fe-4S] cluster serves as cofactor.

It localises to the cell inner membrane. The enzyme catalyses a quinone + NADH + 5 H(+)(in) = a quinol + NAD(+) + 4 H(+)(out). Its function is as follows. NDH-1 shuttles electrons from NADH, via FMN and iron-sulfur (Fe-S) centers, to quinones in the respiratory chain. The immediate electron acceptor for the enzyme in this species is believed to be ubiquinone. Couples the redox reaction to proton translocation (for every two electrons transferred, four hydrogen ions are translocated across the cytoplasmic membrane), and thus conserves the redox energy in a proton gradient. This is NADH-quinone oxidoreductase subunit B from Leptospira biflexa serovar Patoc (strain Patoc 1 / Ames).